The primary structure comprises 473 residues: Ribulose bisphosphate carboxylase large chain 2 (473 aa).

Substrate contacts are provided by Asn-116 and Thr-166. Lys-168 functions as the Proton acceptor in the catalytic mechanism. A substrate-binding site is contributed by Lys-170. Mg(2+)-binding residues include Lys-194, Asp-196, and Glu-197. Lys-194 carries the N6-carboxylysine modification. His-287 functions as the Proton acceptor in the catalytic mechanism. Substrate contacts are provided by Arg-288, His-320, and Ser-372.

This sequence belongs to the RuBisCO large chain family. Type I subfamily. As to quaternary structure, heterohexadecamer of 8 large chains and 8 small chains. Mg(2+) is required as a cofactor.

It catalyses the reaction 2 (2R)-3-phosphoglycerate + 2 H(+) = D-ribulose 1,5-bisphosphate + CO2 + H2O. The enzyme catalyses D-ribulose 1,5-bisphosphate + O2 = 2-phosphoglycolate + (2R)-3-phosphoglycerate + 2 H(+). Its function is as follows. RuBisCO catalyzes two reactions: the carboxylation of D-ribulose 1,5-bisphosphate, the primary event in carbon dioxide fixation, as well as the oxidative fragmentation of the pentose substrate. Both reactions occur simultaneously and in competition at the same active site. The polypeptide is Ribulose bisphosphate carboxylase large chain 2 (Cereibacter sphaeroides (strain ATCC 17025 / ATH 2.4.3) (Rhodobacter sphaeroides)).